Here is a 368-residue protein sequence, read N- to C-terminus: MNLALKSPAPRSGILDIAAYVPGKEHAPGVAKVHKLSSNETPLGASPRAIEAFQKAAFNLERYPDGQANALKEAIAAVHGLNPANILCGNGSDELLGLLCHTYLGPGDEGIVTEHGFLVYKIQITASGGTPVTVKERQERVDVDAILAAVTERTKIVFIANPANPTGTYIPVEEVRRLHAGLPAGVLLVLDAAYAEYVRRNDYEAGLELVSSNRNVVMTRTFSKIYGLAGLRIGWMYAPRDVVEALDRVRGPFNLNAAAIAAGAAAIRDQAFVAAAVDQNHTWLAKIGQALTDIGLRVTPSVTNFVLIHFPEEAGMSASDADAYLTSRGFILRAVGAYGFPNALRMTIGSEEANKGVVAALTEFMGRK.

N6-(pyridoxal phosphate)lysine is present on Lys224.

Belongs to the class-II pyridoxal-phosphate-dependent aminotransferase family. Histidinol-phosphate aminotransferase subfamily. In terms of assembly, homodimer. It depends on pyridoxal 5'-phosphate as a cofactor.

The catalysed reaction is L-histidinol phosphate + 2-oxoglutarate = 3-(imidazol-4-yl)-2-oxopropyl phosphate + L-glutamate. It participates in amino-acid biosynthesis; L-histidine biosynthesis; L-histidine from 5-phospho-alpha-D-ribose 1-diphosphate: step 7/9. This chain is Histidinol-phosphate aminotransferase 1 (hisC1), found in Rhizobium meliloti (strain 1021) (Ensifer meliloti).